Consider the following 324-residue polypeptide: Phospho-N-acetylmuramoyl-pentapeptide-transferase (324 aa).

The next 10 membrane-spanning stretches (helical) occupy residues 5–25 (VMVLAIILSFLITVILSPLFI), 50–70 (GTPTMGGIMILLSIVVTTLLM), 77–97 (LSVETYLLLFVTIGYGLLGFL), 117–137 (LIGQLMIAIVFYFVYQRSGFS), 147–167 (LSINLGFGYVLLLIFMLVGGS), 176–196 (LDGLLAGTAAIAFGAYAVLAW), 203–223 (IAIFCVSVVGAVLGFLVFNAH), 227–247 (VFMGDTGSLALGGAIATVAIL), 250–270 (LEILLVIIGGVFVIETLSVII), and 304–324 (VTFWAVGLLFAMLGIYIEVWI).

The protein belongs to the glycosyltransferase 4 family. MraY subfamily. It depends on Mg(2+) as a cofactor.

It localises to the cell membrane. The catalysed reaction is UDP-N-acetyl-alpha-D-muramoyl-L-alanyl-gamma-D-glutamyl-meso-2,6-diaminopimeloyl-D-alanyl-D-alanine + di-trans,octa-cis-undecaprenyl phosphate = di-trans,octa-cis-undecaprenyl diphospho-N-acetyl-alpha-D-muramoyl-L-alanyl-D-glutamyl-meso-2,6-diaminopimeloyl-D-alanyl-D-alanine + UMP. Its pathway is cell wall biogenesis; peptidoglycan biosynthesis. In terms of biological role, catalyzes the initial step of the lipid cycle reactions in the biosynthesis of the cell wall peptidoglycan: transfers peptidoglycan precursor phospho-MurNAc-pentapeptide from UDP-MurNAc-pentapeptide onto the lipid carrier undecaprenyl phosphate, yielding undecaprenyl-pyrophosphoryl-MurNAc-pentapeptide, known as lipid I. The chain is Phospho-N-acetylmuramoyl-pentapeptide-transferase from Geobacillus sp. (strain WCH70).